Consider the following 713-residue polypeptide: UvrABC system protein B (713 aa).

Residues 35–421 (RRIRAGEKDV…GDGFVEQIIR (387 aa)) enclose the Helicase ATP-binding domain. 48–55 (GATGTGKS) lines the ATP pocket. The Beta-hairpin signature appears at 101 to 124 (YYDYYQPEAYVPQSDTYIEKDSSI). Positions 438–604 (QIDDLVHEIR…PLRKKINDIV (167 aa)) constitute a Helicase C-terminal domain. Residues 624 to 663 (QAKDGKGAKAPVPSLGGKAAAKGAKSAKGKAKETVPTDRP) are disordered. A compositionally biased stretch (low complexity) spans 639–649 (GGKAAAKGAKS). The segment covering 653–663 (KAKETVPTDRP) has biased composition (basic and acidic residues). Residues 668–703 (AEEIEELTNRMRAAAADLQFEIAARLRDEVSEMKKE) enclose the UVR domain.

Belongs to the UvrB family. Forms a heterotetramer with UvrA during the search for lesions. Interacts with UvrC in an incision complex.

The protein resides in the cytoplasm. Functionally, the UvrABC repair system catalyzes the recognition and processing of DNA lesions. A damage recognition complex composed of 2 UvrA and 2 UvrB subunits scans DNA for abnormalities. Upon binding of the UvrA(2)B(2) complex to a putative damaged site, the DNA wraps around one UvrB monomer. DNA wrap is dependent on ATP binding by UvrB and probably causes local melting of the DNA helix, facilitating insertion of UvrB beta-hairpin between the DNA strands. Then UvrB probes one DNA strand for the presence of a lesion. If a lesion is found the UvrA subunits dissociate and the UvrB-DNA preincision complex is formed. This complex is subsequently bound by UvrC and the second UvrB is released. If no lesion is found, the DNA wraps around the other UvrB subunit that will check the other stand for damage. This chain is UvrABC system protein B, found in Streptomyces avermitilis (strain ATCC 31267 / DSM 46492 / JCM 5070 / NBRC 14893 / NCIMB 12804 / NRRL 8165 / MA-4680).